Here is a 111-residue protein sequence, read N- to C-terminus: uncharacterized protein (111 aa).

Homodimer, or homotetramer.

This is an uncharacterized protein from Bacillus subtilis (strain 168).